Here is a 713-residue protein sequence, read N- to C-terminus: Early transcription factor 82 kDa subunit (713 aa).

It belongs to the poxviridae VETF large subunit family. In terms of assembly, heterodimer of a 70 kDa and a 82 kDa subunit. Part of the early transcription complex composed of ETF, RAP94, and the DNA-directed RNA polymerase.

Its function is as follows. Acts with RNA polymerase to initiate transcription from early gene promoters. Is recruited by the RPO-associated protein of 94 kDa (RAP94) to form the early transcription complex, which also contains the core RNA polymerase. ETF heterodimer binds to early gene promoters. This is Early transcription factor 82 kDa subunit (VETFL) from Yaba monkey tumor virus (strain VR587) (YMTV).